An 80-amino-acid polypeptide reads, in one-letter code: Conotoxin Bu3 (80 aa).

The first 22 residues, 1-22, serve as a signal peptide directing secretion; it reads MKLMCVLIVSVLVLTACQLSTA. Residues 23-51 constitute a propeptide that is removed on maturation; sequence DDTRDKQKDRLVRLFRKKRDSSDSGLLPR. Intrachain disulfides connect Cys53–Cys69, Cys60–Cys72, and Cys68–Cys79.

Belongs to the conotoxin O1 superfamily. As to expression, expressed by the venom duct.

It is found in the secreted. This Conus bullatus (Bubble cone) protein is Conotoxin Bu3.